An 862-amino-acid polypeptide reads, in one-letter code: Taxadiene synthase (862 aa).

Residues Asp613, Asp617, Asn757, Thr761, and Glu765 each contribute to the Mg(2+) site. A DDXXD motif motif is present at residues 613–617; it reads DDMAD.

The protein belongs to the terpene synthase family. It depends on Mg(2+) as a cofactor.

The catalysed reaction is (2E,6E,10E)-geranylgeranyl diphosphate = taxa-4(5),11(12)-diene + diphosphate. It participates in alkaloid biosynthesis; taxol biosynthesis; taxa-4(20),11-dien-5alpha-ol from geranylgeranyl diphosphate: step 1/2. Its function is as follows. Catalyzes the cyclization of the ubiquitous isoprenoid intermediate geranylgeranyl diphosphate to taxa-4,11-diene, the parent olefin with a taxane skeleton. The protein is Taxadiene synthase (TDC1) of Taxus brevifolia (Pacific yew).